We begin with the raw amino-acid sequence, 59 residues long: UPF0434 protein Rsph17029_0141 (59 aa).

It belongs to the UPF0434 family.

In Cereibacter sphaeroides (strain ATCC 17029 / ATH 2.4.9) (Rhodobacter sphaeroides), this protein is UPF0434 protein Rsph17029_0141.